The primary structure comprises 533 residues: (E)-beta-farnesene synthase (533 aa).

Residues Asp-286, Asp-290, Asn-430, Ser-434, and Glu-438 each coordinate Mg(2+). The DDXXD motif motif lies at 286–290 (DDMMD).

The protein belongs to the terpene synthase family. Requires Mg(2+) as cofactor. Co(2+) serves as cofactor. It depends on Mn(2+) as a cofactor.

The protein resides in the cytoplasm. The catalysed reaction is (2E,6E)-farnesyl diphosphate = (E)-beta-farnesene + diphosphate. It participates in secondary metabolite biosynthesis; terpenoid biosynthesis. Its function is as follows. Sesquiterpene cyclase catalyzing the production of sixfold more beta-farnesene than alpha-bergamotene from farnesyl diphosphate. Involved in indirect defense by producing volatile signals attracting natural enemies of herbivores. In Zea perennis (Perennial teosinte), this protein is (E)-beta-farnesene synthase.